We begin with the raw amino-acid sequence, 277 residues long: Small ribosomal subunit protein uS3 (277 aa).

Residues 38 to 106 (IRRLLATGLE…QVQLNILEVK (69 aa)) form the KH type-2 domain. A disordered region spans residues 217–277 (AGVEAGRGAP…SAPSAETTES (61 aa)). Residues 225–235 (APDRPRRERPA) are compositionally biased toward basic and acidic residues. Over residues 242–261 (SGSSGTTATSTEAGRAAAET) the composition is skewed to low complexity.

Belongs to the universal ribosomal protein uS3 family. Part of the 30S ribosomal subunit. Forms a tight complex with proteins S10 and S14.

Binds the lower part of the 30S subunit head. Binds mRNA in the 70S ribosome, positioning it for translation. This Mycobacteroides abscessus (strain ATCC 19977 / DSM 44196 / CCUG 20993 / CIP 104536 / JCM 13569 / NCTC 13031 / TMC 1543 / L948) (Mycobacterium abscessus) protein is Small ribosomal subunit protein uS3.